A 538-amino-acid chain; its full sequence is Efflux pump radE (538 aa).

3 stretches are compositionally biased toward basic and acidic residues: residues 1 to 12, 20 to 35, and 65 to 74; these read MATSRDFGREPP, EAGH…VSEH, and DPKEEERDPN. Disordered regions lie at residues 1–35 and 65–90; these read MATS…VSEH and DPKE…PQNW. Helical transmembrane passes span 100 to 120, 134 to 154, 163 to 183, 194 to 214, 225 to 245, 253 to 273, 327 to 347, 362 to 382, 409 to 429, 436 to 456, 482 to 502, and 505 to 525; these read AVLS…APGI, LATF…LVLA, VVIY…CALS, FLCG…IADL, SVWS…GGFL, WIFW…LLVL, PICL…YFMI, EGIV…GVVV, IPPT…YGWT, WAVP…INIS, IFGA…GLGW, and SLLA…FYYG.

Belongs to the major facilitator superfamily.

The protein resides in the cell membrane. Functionally, efflux pump that might be required for efficient secretion of radicicol or other secondary metabolies produced by the radicicol gene cluster. In Floropilus chiversii (Chaetomium chiversii), this protein is Efflux pump radE.